Reading from the N-terminus, the 459-residue chain is Fibrinogen C domain-containing protein 1 (459 aa).

Positions 1–22 are disordered; that stretch reads MVHERWKTVGSASQLEDRPRDK. Over 1 to 33 the chain is Cytoplasmic; the sequence is MVHERWKTVGSASQLEDRPRDKPQRASCSYVLC. Residues 34–54 traverse the membrane as a helical; Signal-anchor for type II membrane protein segment; it reads TVLLSLAVLLAVAVTGVVLFL. The Extracellular segment spans residues 55 to 459; that stretch reads NHTHTPGTAP…MKIRPVREDR (405 aa). Residues 233–456 form the Fibrinogen C-terminal domain; that stretch reads CANGSRPRDC…FSEMKIRPVR (224 aa). Cys242 and Cys271 form a disulfide bridge. N-linked (GlcNAc...) asparagine glycosylation occurs at Asn338. Ca(2+) contacts are provided by Asp391 and Asp393. A disulfide bond links Cys399 and Cys412.

In terms of assembly, homotetramer; disulfide-linked.

It is found in the membrane. Acetyl group-binding receptor which shows a high-affinity and calcium-dependent binding to acetylated structures such as chitin, some N-acetylated carbohydrates, and amino acids, but not to their non-acetylated counterparts. Can facilitate the endocytosis of acetylated components. In Mus musculus (Mouse), this protein is Fibrinogen C domain-containing protein 1 (Fibcd1).